The chain runs to 192 residues: Crossover junction endodeoxyribonuclease RuvC (192 aa).

Catalysis depends on residues aspartate 8, glutamate 67, and aspartate 139. Positions 8, 67, and 139 each coordinate Mg(2+).

It belongs to the RuvC family. Homodimer which binds Holliday junction (HJ) DNA. The HJ becomes 2-fold symmetrical on binding to RuvC with unstacked arms; it has a different conformation from HJ DNA in complex with RuvA. In the full resolvosome a probable DNA-RuvA(4)-RuvB(12)-RuvC(2) complex forms which resolves the HJ. Requires Mg(2+) as cofactor.

It localises to the cytoplasm. It carries out the reaction Endonucleolytic cleavage at a junction such as a reciprocal single-stranded crossover between two homologous DNA duplexes (Holliday junction).. In terms of biological role, the RuvA-RuvB-RuvC complex processes Holliday junction (HJ) DNA during genetic recombination and DNA repair. Endonuclease that resolves HJ intermediates. Cleaves cruciform DNA by making single-stranded nicks across the HJ at symmetrical positions within the homologous arms, yielding a 5'-phosphate and a 3'-hydroxyl group; requires a central core of homology in the junction. The consensus cleavage sequence is 5'-(A/T)TT(C/G)-3'. Cleavage occurs on the 3'-side of the TT dinucleotide at the point of strand exchange. HJ branch migration catalyzed by RuvA-RuvB allows RuvC to scan DNA until it finds its consensus sequence, where it cleaves and resolves the cruciform DNA. The chain is Crossover junction endodeoxyribonuclease RuvC from Actinobacillus pleuropneumoniae serotype 5b (strain L20).